We begin with the raw amino-acid sequence, 477 residues long: Ribulose bisphosphate carboxylase large chain (477 aa).

A propeptide spanning residues 1-2 (MS) is cleaved from the precursor. The residue at position 3 (proline 3) is an N-acetylproline. Position 14 is an N6,N6,N6-trimethyllysine (lysine 14). Residues asparagine 123 and threonine 173 each coordinate substrate. Lysine 175 (proton acceptor) is an active-site residue. Lysine 177 is a substrate binding site. Residues lysine 201, aspartate 203, and glutamate 204 each coordinate Mg(2+). Residue lysine 201 is modified to N6-carboxylysine. Histidine 294 functions as the Proton acceptor in the catalytic mechanism. The substrate site is built by arginine 295, histidine 327, and serine 379.

Belongs to the RuBisCO large chain family. Type I subfamily. In terms of assembly, heterohexadecamer of 8 large chains and 8 small chains; disulfide-linked. The disulfide link is formed within the large subunit homodimers. Mg(2+) is required as a cofactor. Post-translationally, the disulfide bond which can form in the large chain dimeric partners within the hexadecamer appears to be associated with oxidative stress and protein turnover.

It localises to the plastid. Its subcellular location is the chloroplast. The enzyme catalyses 2 (2R)-3-phosphoglycerate + 2 H(+) = D-ribulose 1,5-bisphosphate + CO2 + H2O. It carries out the reaction D-ribulose 1,5-bisphosphate + O2 = 2-phosphoglycolate + (2R)-3-phosphoglycerate + 2 H(+). Its function is as follows. RuBisCO catalyzes two reactions: the carboxylation of D-ribulose 1,5-bisphosphate, the primary event in carbon dioxide fixation, as well as the oxidative fragmentation of the pentose substrate in the photorespiration process. Both reactions occur simultaneously and in competition at the same active site. The polypeptide is Ribulose bisphosphate carboxylase large chain (rbcL) (Solanum lycopersicum (Tomato)).